The following is a 378-amino-acid chain: Circumsporozoite protein (378 aa).

The signal sequence occupies residues 1–22 (MKNFNLLAVSSILLVDLFPTHC). The tract at residues 50–291 (AQVRQSASRG…GQGQNNEGAN (242 aa)) is disordered. Basic and acidic residues-rich tracts occupy residues 66–92 (PKNE…ENKL) and 101–126 (ARAE…DGAR). Residues 80-88 (KKVEPKKPR) are required for the binding to heparan sulfate proteoglycans (HSPGs) on the surface of host hepatocytes. The segment at 91–95 (KLKQP) is region I; contains the proteolytic cleavage site. Repeat copies occupy residues 99–104 (DGARAE), 105–110 (DGARAE), 111–116 (DGARAE), 117–122 (DGARAE), 123–128 (DGARAA), 129–134 (DGARAA), 135–140 (DGARAA), 141–146 (DGARAE), 147–152 (DGARAE), 153–158 (DGARAE), 159–164 (DGARAA), 165–170 (DGARAA), 171–176 (DGARAA), 177–182 (DGARAA), 183–188 (DGARAA), 189–194 (DGARAA), 195–200 (DGARAA), 201–206 (DGARAE), 212–222 (GNREGGQAGAG), 223–233 (GNQAGGQAGAG), 234–244 (GNQAGGQAGAG), 245–255 (GNQAGGQAGAG), 256–266 (GNQAGGQAGAG), and 267–277 (GNRAGGQAGAG). The interval 99 to 206 (DGARAEDGAR…ARAADGARAE (108 aa)) is 18 X 6 AA tandem repeats of D-G-A-R-A-[EA]. The span at 127–140 (AADGARAADGARAA) shows a compositional bias: low complexity. The segment covering 141–162 (DGARAEDGARAEDGARAEDGAR) has biased composition (basic and acidic residues). Residues 163–200 (AADGARAADGARAADGARAADGARAADGARAADGARAA) are compositionally biased toward low complexity. The 6 X 11 AA tandem repeats of G-N-[QR]-[AE]-G-G-Q-A-G-A-G stretch occupies residues 212–277 (GNREGGQAGA…NRAGGQAGAG (66 aa)). The segment covering 214–283 (REGGQAGAGG…AGAGDAGAGQ (70 aa)) has biased composition (gly residues). The region spanning 304 to 356 (KIRSTIGVEWSPCTVTCGKGVRMRRKVSAANKKPEELDVNDLETEVCTMDKCA) is the TSP type-1 domain. 2 disulfide bridges follow: C316–C350 and C320–C355. T319 carries O-linked (Fuc) threonine glycosylation. C355 carries GPI-anchor amidated cysteine lipidation. A propeptide spans 356–378 (AGIFNVVSNSLGLVILLVLALFN) (removed in mature form).

Belongs to the plasmodium circumsporozoite protein family. Post-translationally, during host cell invasion, proteolytically cleaved at the cell membrane in the region I by a papain-like cysteine protease of parasite origin. Cleavage is triggered by the sporozoite contact with highly sulfated heparan sulfate proteoglycans (HSPGs) present on the host hepatocyte cell surface. Cleavage exposes the TSP type-1 (TSR) domain and is required for productive invasion of host hepatocytes but not for adhesion to the host cell membrane. Cleavage is dispensable for sporozoite development in the oocyst, motility and for traversal of host and vector cells. In terms of processing, O-glycosylated; maybe by POFUT2.

It localises to the cell membrane. The protein localises to the cytoplasm. Its function is as follows. Essential sporozoite protein. In the mosquito vector, required for sporozoite development in the oocyst, migration through the vector hemolymph and entry into the vector salivary glands. In the vertebrate host, required for sporozoite migration through the host dermis and infection of host hepatocytes. Binds to highly sulfated heparan sulfate proteoglycans (HSPGs) on the surface of host hepatocytes. Functionally, in the vertebrate host, binds to highly sulfated heparan sulfate proteoglycans (HSPGs) on the surface of host hepatocytes and is required for sporozoite invasion of the host hepatocytes. This Plasmodium cynomolgi (strain London) protein is Circumsporozoite protein.